We begin with the raw amino-acid sequence, 124 residues long: Small ribosomal subunit protein uS13 (124 aa).

A disordered region spans residues 99–124 (RGQRTRTNARTRKGPRKTVGVMRKKS). Residues 101–124 (QRTRTNARTRKGPRKTVGVMRKKS) show a composition bias toward basic residues.

The protein belongs to the universal ribosomal protein uS13 family. As to quaternary structure, part of the 30S ribosomal subunit. Forms a loose heterodimer with protein S19. Forms two bridges to the 50S subunit in the 70S ribosome.

Located at the top of the head of the 30S subunit, it contacts several helices of the 16S rRNA. In the 70S ribosome it contacts the 23S rRNA (bridge B1a) and protein L5 of the 50S subunit (bridge B1b), connecting the 2 subunits; these bridges are implicated in subunit movement. Contacts the tRNAs in the A and P-sites. The chain is Small ribosomal subunit protein uS13 from Caldicellulosiruptor saccharolyticus (strain ATCC 43494 / DSM 8903 / Tp8T 6331).